A 278-amino-acid polypeptide reads, in one-letter code: Bifunctional protein FolD (278 aa).

Residues 164–166 (GRS) and Thr-228 contribute to the NADP(+) site.

It belongs to the tetrahydrofolate dehydrogenase/cyclohydrolase family. As to quaternary structure, homodimer.

It carries out the reaction (6R)-5,10-methylene-5,6,7,8-tetrahydrofolate + NADP(+) = (6R)-5,10-methenyltetrahydrofolate + NADPH. The enzyme catalyses (6R)-5,10-methenyltetrahydrofolate + H2O = (6R)-10-formyltetrahydrofolate + H(+). Its pathway is one-carbon metabolism; tetrahydrofolate interconversion. Its function is as follows. Catalyzes the oxidation of 5,10-methylenetetrahydrofolate to 5,10-methenyltetrahydrofolate and then the hydrolysis of 5,10-methenyltetrahydrofolate to 10-formyltetrahydrofolate. The sequence is that of Bifunctional protein FolD from Mycoplasmopsis synoviae (strain 53) (Mycoplasma synoviae).